The sequence spans 524 residues: Na(+)/H(+) antiporter NhaG (524 aa).

Helical transmembrane passes span 6–26 (LHHIFELGFFVVMIAAGITAI), 33–53 (PYPIALVIVGTIIGLVHIPLF), 59–79 (FITEGEVFNFVIITLFLPALL), 98–118 (VLALFGGTLISFLIVGFSSMW), 126–146 (AAFVFAALMSATDPVSVLSIF), 169–189 (LAVVLFNISAFYLMTYLDLGI), 193–213 (GLGLWEFVKVISLGLIIGGVL), 242–262 (FLLAEMAGASGVIAVVVAALI), 283–303 (FWDVAALLANSLVFLMVGLEI), 312–332 (WGLAIMAIVIVLIARSAAVYI), and 374–394 (DILVFAFSVVLFSLVVQGLTI).

It belongs to the monovalent cation:proton antiporter 1 (CPA1) transporter (TC 2.A.36) family.

Its subcellular location is the cell membrane. In terms of biological role, na(+)/H(+) antiporter that extrudes sodium in exchange for external protons. Can also transport lithium. This chain is Na(+)/H(+) antiporter NhaG (nhaG), found in Bacillus atrophaeus.